A 993-amino-acid polypeptide reads, in one-letter code: Vacuolar membrane protease (993 aa).

At 1–24 (MSPAMANPRVRKFNPIAFTPLPVT) the chain is on the cytoplasmic side. Residues 25-45 (LITTIVYLAVLILVLVTYLVV) form a helical membrane-spanning segment. The Vacuolar portion of the chain corresponds to 46-391 (PPAPTLEMSP…SAFAVFRLHT (346 aa)). N-linked (GlcNAc...) asparagine glycosylation is found at N59, N116, and N119. Zn(2+) is bound by residues H175 and D187. E221 (proton acceptor) is an active-site residue. Position 222 (E222) interacts with Zn(2+). Residue N238 is glycosylated (N-linked (GlcNAc...) asparagine). Zn(2+) is bound by residues E247 and H320. The helical transmembrane segment at 392–412 (LFALSVTLLVSAPLVLFITSI) threads the bilayer. The Cytoplasmic portion of the chain corresponds to 413-447 (ALSKTDRMYLFSMSKSLGGTSETVSLRGLRGLFRT). A helical membrane pass occupies residues 448–468 (PIILTVTTVITIGLAYLLEKI). Over 469–475 (NPYIVHS) the chain is Vacuolar. Residues 476–496 (SQFAVWSMMLSVWIFVAWFLA) form a helical membrane-spanning segment. Topologically, residues 497-509 (RVADFFRPSALHR) are cytoplasmic. The helical transmembrane segment at 510 to 530 (AYSYTWIFIATWIMLVISTVY) threads the bilayer. Residues 531–534 (ANQK) are Vacuolar-facing. Residues 535 to 555 (GIAAGYFIFFYFAAVFLATWV) form a helical membrane-spanning segment. Topologically, residues 556 to 672 (SYLELFSLPR…WSWTLPRWTW (117 aa)) are cytoplasmic. The segment at 579–621 (RRSSSLSSRLLTPSADELPSDIGPNGAENLGDPDETDPTESTS) is disordered. The helical transmembrane segment at 673-693 (ILQLLLLAPIVIILVGQVGLL) threads the bilayer. Over 694–709 (LTTAMSQIGSDGVSTF) the chain is Vacuolar. A helical membrane pass occupies residues 710–730 (IVYLACALLSTLLFAPLFPFI). The Cytoplasmic portion of the chain corresponds to 731 to 737 (HRFTYHV). The chain crosses the membrane as a helical span at residues 738–758 (PTFLLLIFIGTLIYNLVAFPF). At 759–993 (SPANRLKIFF…VEASHDFIIQ (235 aa)) the chain is on the vacuolar side. N806, N847, and N955 each carry an N-linked (GlcNAc...) asparagine glycan.

The protein belongs to the peptidase M28 family. Requires Zn(2+) as cofactor.

It localises to the vacuole membrane. May be involved in vacuolar sorting and osmoregulation. The chain is Vacuolar membrane protease from Paracoccidioides lutzii (strain ATCC MYA-826 / Pb01) (Paracoccidioides brasiliensis).